Reading from the N-terminus, the 256-residue chain is Protein crossbronx-like (256 aa).

The UBC core domain occupies 17-179 (NQGYQVLAEY…AKASIVWSWK (163 aa)).

The protein belongs to the ubiquitin-conjugating enzyme family. FTS subfamily.

This is Protein crossbronx-like from Drosophila mojavensis (Fruit fly).